Consider the following 207-residue polypeptide: Ribonuclease HII (207 aa).

An RNase H type-2 domain is found at threonine 18–serine 207. A divalent metal cation-binding residues include aspartate 24, glutamate 25, and aspartate 116.

This sequence belongs to the RNase HII family. The cofactor is Mn(2+). It depends on Mg(2+) as a cofactor.

The protein resides in the cytoplasm. The catalysed reaction is Endonucleolytic cleavage to 5'-phosphomonoester.. Its function is as follows. Endonuclease that specifically degrades the RNA of RNA-DNA hybrids. This Mycoplasma mycoides subsp. mycoides SC (strain CCUG 32753 / NCTC 10114 / PG1) protein is Ribonuclease HII.